A 320-amino-acid chain; its full sequence is ATPase H(+)-transporting accessory protein 2 (320 aa).

Residues 1–17 (MLRVFVIFSLFIAAINA) form the signal peptide. The Lumenal portion of the chain corresponds to 18-277 (SGEFTVLNRP…YGSDYPVIFN (260 aa)). The chain crosses the membrane as a helical span at residues 278-298 (IILWFMVVFGLSLLAICYAIA). Residues 299–320 (AMDPGRDSIIYRMTSTRIKKDN) are Cytoplasmic-facing. Residues 317–320 (KKDN) carry the Mediates retrograde transport to the ER motif.

In terms of assembly, interacts with fz and fz2. Interacts (via N-terminus) with stan. As an accessory component of the multisubunit proton-transporting vacuolar (V)-ATPase protein pump, might interacts with VhaAC45. Post-translationally, proteolytically cleaved by a furin-like convertase in the trans-Golgi network to generate N- and C-terminal fragments. Cleavage is reduced in the fat body.

Its subcellular location is the cell membrane. It localises to the endoplasmic reticulum membrane. It is found in the vesicle. The protein resides in the apical cell membrane. The protein localises to the golgi apparatus membrane. Its subcellular location is the secreted. Multifunctional protein which functions as a transmembrane receptor in the planar cell polarity (PCP) and is involved in the assembly of the proton-transporting vacuolar (V)-ATPase protein pump. As transmembrane receptor mediates fz/PCP signaling through interaction with fz and stabilizes asymmetric PCP domains through its interaction with stan. Also mediates Wnt/beta-cat signaling through interaction with fz/fz2. Probably by controlling the assembly of the V-ATPase pump and thus the acidification of the endo-lysosomal system, plays a role in many neuronal processes including synapse morphology and synaptic transmission. Functionally, stabilizes asymmetric Planar Cell Polarity (PCP) domains through its interaction with stan. The chain is ATPase H(+)-transporting accessory protein 2 from Drosophila melanogaster (Fruit fly).